We begin with the raw amino-acid sequence, 624 residues long: Actin-related protein 8 (624 aa).

Met-1 bears the N-acetylmethionine mark. The segment covering 1-25 (MTQAEKGDTENGKEKGGEKEKEQRG) has biased composition (basic and acidic residues). The disordered stretch occupies residues 1-29 (MTQAEKGDTENGKEKGGEKEKEQRGVKRP). ATP is bound by residues Ser-55 and Thr-56. Residue Ser-132 is modified to Phosphoserine. 283-286 (DVGD) serves as a coordination point for ATP. Position 412 is a phosphoserine (Ser-412). Positions 430-462 (SKQEQSAKATADRKSASKPIGFEGDLRGQSSDL) are disordered.

This sequence belongs to the actin family. ARP8 subfamily. Component of the chromatin remodeling INO80 complex; specifically part of a complex module associated with the DBINO domain of INO80. Interacts with ACTR5; the interaction is observed in asynchronous (interphase) cells but not in metaphase-arrested cells indicative for a possible dissociation of the INO80 complex in mitotic cells. Exists as monomers and dimers, but the dimer is most probably the biologically relevant form required for stable interactions with histones that exploits the twofold symmetry of the nucleosome core.

Its subcellular location is the nucleus. The protein localises to the chromosome. Functionally, plays an important role in the functional organization of mitotic chromosomes. Exhibits low basal ATPase activity, and unable to polymerize. In terms of biological role, proposed core component of the chromatin remodeling INO80 complex which is involved in transcriptional regulation, DNA replication and probably DNA repair. Required for the recruitment of INO80 (and probably the INO80 complex) to sites of DNA damage. Strongly prefer nucleosomes and H3-H4 tetramers over H2A-H2B dimers, suggesting it may act as a nucleosome recognition module within the complex. This Homo sapiens (Human) protein is Actin-related protein 8 (ACTR8).